A 473-amino-acid chain; its full sequence is Sun domain-containing protein 1 (473 aa).

Positions 1-47 (MALRHTISPQFSNRHSPPVTRSVSRTGVHQPLDTSTPVTRRDSQPGT) are disordered. A compositionally biased stretch (polar residues) spans 7–47 (ISPQFSNRHSPPVTRSVSRTGVHQPLDTSTPVTRRDSQPGT). Coiled coils occupy residues 163 to 191 (ISNLRAEFSAHDKQLDFKTDHLEKLLENV) and 204 to 235 (EELKQIKLWQAEISDALQQMKKEIDDAKSTKI). A disordered region spans residues 237–257 (HSTPEKAPETAPTASLPPSSQ). Residues 248–257 (PTASLPPSSQ) are compositionally biased toward polar residues. A helical transmembrane segment spans residues 262 to 282 (HITRRALLGVNVANSLIGASI). Residues 279–443 (GASIDHSCSS…YLIRVYGEPV (165 aa)) form the SUN domain. Residues 443-473 (VDPPKETQPMTDNGTESKLESAIVNSVSETA) are disordered.

It is found in the nucleus membrane. The protein localises to the nucleus envelope. Involved in centrosome attachment to the nucleus. Required for zyg-12 localization to the nuclear envelope. Together with pot-1, it is required to anchor telomeres to the nuclear envelope in embryos. In Caenorhabditis elegans, this protein is Sun domain-containing protein 1.